The sequence spans 125 residues: Ribosome-binding factor A (125 aa).

Belongs to the RbfA family. As to quaternary structure, monomer. Binds 30S ribosomal subunits, but not 50S ribosomal subunits or 70S ribosomes.

It is found in the cytoplasm. One of several proteins that assist in the late maturation steps of the functional core of the 30S ribosomal subunit. Associates with free 30S ribosomal subunits (but not with 30S subunits that are part of 70S ribosomes or polysomes). Required for efficient processing of 16S rRNA. May interact with the 5'-terminal helix region of 16S rRNA. This chain is Ribosome-binding factor A, found in Paracidovorax citrulli (strain AAC00-1) (Acidovorax citrulli).